The sequence spans 370 residues: tRNA 2-selenouridine synthase (370 aa).

A Rhodanese domain is found at 12–136 (FLDDVPMMDM…MRTFLLETTQ (125 aa)). The active-site S-selanylcysteine intermediate is Cys-95.

Belongs to the SelU family. In terms of assembly, monomer.

It catalyses the reaction 5-methylaminomethyl-2-thiouridine(34) in tRNA + selenophosphate + (2E)-geranyl diphosphate + H2O + H(+) = 5-methylaminomethyl-2-selenouridine(34) in tRNA + (2E)-thiogeraniol + phosphate + diphosphate. The enzyme catalyses 5-methylaminomethyl-2-thiouridine(34) in tRNA + (2E)-geranyl diphosphate = 5-methylaminomethyl-S-(2E)-geranyl-thiouridine(34) in tRNA + diphosphate. The catalysed reaction is 5-methylaminomethyl-S-(2E)-geranyl-thiouridine(34) in tRNA + selenophosphate + H(+) = 5-methylaminomethyl-2-(Se-phospho)selenouridine(34) in tRNA + (2E)-thiogeraniol. It carries out the reaction 5-methylaminomethyl-2-(Se-phospho)selenouridine(34) in tRNA + H2O = 5-methylaminomethyl-2-selenouridine(34) in tRNA + phosphate. Functionally, involved in the post-transcriptional modification of the uridine at the wobble position (U34) of tRNA(Lys), tRNA(Glu) and tRNA(Gln). Catalyzes the conversion of 2-thiouridine (S2U-RNA) to 2-selenouridine (Se2U-RNA). Acts in a two-step process involving geranylation of 2-thiouridine (S2U) to S-geranyl-2-thiouridine (geS2U) and subsequent selenation of the latter derivative to 2-selenouridine (Se2U) in the tRNA chain. This Pseudomonas putida (strain ATCC 700007 / DSM 6899 / JCM 31910 / BCRC 17059 / LMG 24140 / F1) protein is tRNA 2-selenouridine synthase.